The chain runs to 395 residues: S-adenosylmethionine synthase (395 aa).

His14 is a binding site for ATP. Residue Asp16 coordinates Mg(2+). Position 42 (Glu42) interacts with K(+). The L-methionine site is built by Glu55 and Gln98. The flexible loop stretch occupies residues 98–108 (QSPDIAMGVDK). ATP-binding positions include 175-177 (DGK), 242-243 (RF), Asp251, 257-258 (RK), Ala274, and Lys278. An L-methionine-binding site is contributed by Asp251. Residue Lys282 participates in L-methionine binding.

This sequence belongs to the AdoMet synthase family. Homotetramer; dimer of dimers. It depends on Mg(2+) as a cofactor. The cofactor is K(+).

The protein resides in the cytoplasm. The enzyme catalyses L-methionine + ATP + H2O = S-adenosyl-L-methionine + phosphate + diphosphate. The protein operates within amino-acid biosynthesis; S-adenosyl-L-methionine biosynthesis; S-adenosyl-L-methionine from L-methionine: step 1/1. In terms of biological role, catalyzes the formation of S-adenosylmethionine (AdoMet) from methionine and ATP. The overall synthetic reaction is composed of two sequential steps, AdoMet formation and the subsequent tripolyphosphate hydrolysis which occurs prior to release of AdoMet from the enzyme. This chain is S-adenosylmethionine synthase, found in Thermosipho melanesiensis (strain DSM 12029 / CIP 104789 / BI429).